The primary structure comprises 418 residues: Glutamyl-tRNA reductase (418 aa).

Residues 49–52 (TCNR), S109, 114–116 (EPQ), and Q120 each bind substrate. The Nucleophile role is filled by C50. 189-194 (GAGETI) serves as a coordination point for NADP(+).

It belongs to the glutamyl-tRNA reductase family. Homodimer.

The catalysed reaction is (S)-4-amino-5-oxopentanoate + tRNA(Glu) + NADP(+) = L-glutamyl-tRNA(Glu) + NADPH + H(+). Its pathway is porphyrin-containing compound metabolism; protoporphyrin-IX biosynthesis; 5-aminolevulinate from L-glutamyl-tRNA(Glu): step 1/2. Its function is as follows. Catalyzes the NADPH-dependent reduction of glutamyl-tRNA(Glu) to glutamate 1-semialdehyde (GSA). The sequence is that of Glutamyl-tRNA reductase from Escherichia coli O127:H6 (strain E2348/69 / EPEC).